A 403-amino-acid polypeptide reads, in one-letter code: 8-amino-7-oxononanoate synthase (403 aa).

Arg-25 lines the substrate pocket. Position 112–113 (112–113 (GY)) interacts with pyridoxal 5'-phosphate. His-137 contributes to the substrate binding site. Positions 182, 210, and 239 each coordinate pyridoxal 5'-phosphate. Lys-242 is modified (N6-(pyridoxal phosphate)lysine). Thr-358 lines the substrate pocket.

This sequence belongs to the class-II pyridoxal-phosphate-dependent aminotransferase family. BioF subfamily. In terms of assembly, homodimer. Requires pyridoxal 5'-phosphate as cofactor.

The catalysed reaction is 6-carboxyhexanoyl-[ACP] + L-alanine + H(+) = (8S)-8-amino-7-oxononanoate + holo-[ACP] + CO2. The protein operates within cofactor biosynthesis; biotin biosynthesis. In terms of biological role, catalyzes the decarboxylative condensation of pimeloyl-[acyl-carrier protein] and L-alanine to produce 8-amino-7-oxononanoate (AON), [acyl-carrier protein], and carbon dioxide. This Marinomonas sp. (strain MWYL1) protein is 8-amino-7-oxononanoate synthase.